Here is a 671-residue protein sequence, read N- to C-terminus: Heat shock transcription factor hsf-1 (671 aa).

Composition is skewed to low complexity over residues 1-17 (MQPT…QQQQ) and 38-52 (QQAP…NHQN). Residues 1–61 (MQPTGNQIQQ…NGAIGGKKSS (61 aa)) are disordered. The tract at residues 89–196 (LPVFLIKLWN…LLSQIKRKQS (108 aa)) is DNA-binding domain. The stretch at 206-240 (NEQTQQNLEVVMAEMRAMREKAKNMEDKMNKLTKE) forms a coiled coil. Disordered regions lie at residues 329–423 (QEPF…PLTH), 437–493 (YQGA…VNNY), 526–552 (HHPT…GLSP), and 612–671 (NAPE…PNLV). Over residues 370-386 (GAQSSRYSDGGATSSRE) the composition is skewed to polar residues. Positions 439–456 (GASPASGGPSTSSSAPSG) are enriched in low complexity. Polar residues-rich tracts occupy residues 474–493 (ATRQ…VNNY) and 528–552 (PTTS…GLSP).

Belongs to the HSF family. Forms homodimers and homotrimers. Component of the DHIC (ddl-1-containing hsf-1 inhibitory complex), which contains at least ddl-1, ddl-2, hsb-1 and hsf-1. Within the complex, interacts with ddl-1. Formation of the DHIC may be dependent upon the Insulin/IGF-1-like signaling (IIS) mediated pathway. Post-translationally, phosphorylated. In terms of processing, sumoylated. Sumoylation may inhibit transcriptional activity in response to heat shock. In terms of tissue distribution, expressed in intestinal cells, body wall muscle cells, and hypodermal cells, as well as many neurons in the head and tail.

Its subcellular location is the nucleus. The protein resides in the cytoplasm. Functionally, functions as a stress-inducible and DNA-binding transcription factor, playing a central role in the transcriptional activation of the heat shock response (HSR), leading to the expression of a large class of molecular chaperones, heat shock proteins (HSPs), that protect cells from cellular insult damage. Upon exposure to heat and other stress stimuli, activates gene transcription through binding to site-specific heat shock elements (HSEs) present in the promoter regions of target genes, such as the HSPs. Binds to inverted 5'-NGAAN-3' pentamer DNA sequences in HSEs. Involved in positive modulation of expression of heat shock protein hsp-16.2 in response to heat shock; may act in concert with homeodomain-interacting protein kinase hpk-1. In response to heat shock or starvation, required for the modulation of lifespan, and protection against aberrant protein aggregation proteotoxicity; may act in parallel with the Insulin/IGF-1-like signaling (IIS) mediated pathway. Plays a role in modulating autophagy, in response to a moderate and short-term heat shock, also known as a hormetic heat shock. Involved in positive modulation of ascaroside pheromone biosynthesis in response to heat shock, perhaps by directly activating transcription of peroxisomal fatty acid beta-oxidation genes. Required in modulating the response to infection by either Gram-negative or Gram-positive bacteria, perhaps acting via regulation of expression of Hsp90/daf-21 and members of the small heat shock protein (HSP20) family. May play a role downstream of the daf-16/FOXO and daf-2 signaling pathway in response to bacterial pathogens. Modulates expression of multiple microRNA genes, in both heat shock-dependent and -independent manner. Independent of heat shock, required to modulate expression of genes involved in larval development, mainly distinct from HSPs; acts in concert with putative transcription factor efl-1/E2F, which may form part of a multiprotein DRM complex. Independent of heat shock, involved in promoting death of the linker cell, a male-specific cell which guides the elongation of the gonad; perhaps acting by modulating expression of ubiquitin-conjugating enzyme let-70. Plays a role in egg-laying. The sequence is that of Heat shock transcription factor hsf-1 from Caenorhabditis elegans.